The sequence spans 279 residues: Oxygen-dependent coproporphyrinogen-III oxidase (279 aa).

Ser-102 contacts substrate. A divalent metal cation contacts are provided by His-106 and His-116. The active-site Proton donor is His-116. 118–120 lines the substrate pocket; it reads NTR. Residues His-149 and His-179 each contribute to the a divalent metal cation site. An important for dimerization region spans residues 244 to 279; sequence YVEFNLLYDRGTKFGLMTDGNVEAILMSLPPEVKFN.

This sequence belongs to the aerobic coproporphyrinogen-III oxidase family. As to quaternary structure, homodimer. The cofactor is a divalent metal cation.

The protein resides in the cytoplasm. The enzyme catalyses coproporphyrinogen III + O2 + 2 H(+) = protoporphyrinogen IX + 2 CO2 + 2 H2O. Its pathway is porphyrin-containing compound metabolism; protoporphyrin-IX biosynthesis; protoporphyrinogen-IX from coproporphyrinogen-III (O2 route): step 1/1. In terms of biological role, involved in the heme biosynthesis. Catalyzes the aerobic oxidative decarboxylation of propionate groups of rings A and B of coproporphyrinogen-III to yield the vinyl groups in protoporphyrinogen-IX. In Rickettsia peacockii (strain Rustic), this protein is Oxygen-dependent coproporphyrinogen-III oxidase.